The primary structure comprises 150 residues: SsrA-binding protein (150 aa).

Belongs to the SmpB family.

It localises to the cytoplasm. In terms of biological role, required for rescue of stalled ribosomes mediated by trans-translation. Binds to transfer-messenger RNA (tmRNA), required for stable association of tmRNA with ribosomes. tmRNA and SmpB together mimic tRNA shape, replacing the anticodon stem-loop with SmpB. tmRNA is encoded by the ssrA gene; the 2 termini fold to resemble tRNA(Ala) and it encodes a 'tag peptide', a short internal open reading frame. During trans-translation Ala-aminoacylated tmRNA acts like a tRNA, entering the A-site of stalled ribosomes, displacing the stalled mRNA. The ribosome then switches to translate the ORF on the tmRNA; the nascent peptide is terminated with the 'tag peptide' encoded by the tmRNA and targeted for degradation. The ribosome is freed to recommence translation, which seems to be the essential function of trans-translation. The sequence is that of SsrA-binding protein from Chlamydia caviae (strain ATCC VR-813 / DSM 19441 / 03DC25 / GPIC) (Chlamydophila caviae).